Here is a 536-residue protein sequence, read N- to C-terminus: Multifunctional cytochrome P450 monooxygenase af510 (536 aa).

Residues 4–24 (ELSTLQLSCVAFVAFMAVLVF) form a helical membrane-spanning segment. Residues Asn-210 and Asn-293 are each glycosylated (N-linked (GlcNAc...) asparagine). A heme-binding site is contributed by Cys-448.

Belongs to the cytochrome P450 family. It depends on heme as a cofactor.

The protein resides in the membrane. It carries out the reaction (+)-exo-beta-bergamotene + 2 reduced [NADPH--hemoprotein reductase] + 3 O2 = 5-dehydro-6-demethoxyfumagillol + 2 oxidized [NADPH--hemoprotein reductase] + 3 H2O + 2 H(+). Its pathway is secondary metabolite biosynthesis; terpenoid biosynthesis. Multifunctional cytochrome P450 monooxygenase; part of the gene cluster that mediates the biosynthesis of fumagillin, a meroterpenoid that has numerous biological activities including irreversible inhibition of human type 2 methionine aminopeptidase (METAP2). Within the pathway, the multifunctional cytochrome P450 monooxygenase af510 acts as a 2,4,6-trichlorophenol monooxygenase that first performs the C-H hydroxylation at the bridgehead C5 position to yield 5R-hydroxyl-beta-trans-bergamotene. Subsequently, a four electron oxidation initiated at C-9 coupled to cleavage of the cyclobutane C5-C8 bond of the bicyclo[3.1.1] core yields the epoxyketone intermediate 5-keto-cordycol. An additional epoxidation reaction also catalyzed by af510 then furnishes the characteristic bisepoxide ketone 5-keto-demethoxyfumagillol. The pathway begins with the conversion of farnesyl pyrophosphate (FPP) to beta-trans-bergamotene by the membrane-bound beta-trans-bergamotene synthase af520. The multifunctional cytochrome P450 monooxygenase af510 then converts beta-trans-bergamotene into 5-keto-demethoxyfumagillol via several oxydation steps. 5-keto-demethoxyfumagillol is then subjected to successive C-6 hydroxylation and O-methylation by the dioxygenase af480 and O-methyltransferase af390-400, respectively, to yield 5-keto-fumagillol, which is then stereoselectively reduced by the keto-reductase af490 to 5R-hydroxy-seco-sesquiterpene. The next step is the polyketide transferase af380-catalyzed transfer of a dodecapentaenoyl group synthesized by the polyketide synthase af370 onto 5R-hydroxy-seco-sesquiterpene which leads to the production of prefumagillin. Finally, oxidative cleavage by the monooxygenase af470 converts prefumagillin to fumagillin. The chain is Multifunctional cytochrome P450 monooxygenase af510 from Aspergillus fumigatus (strain ATCC MYA-4609 / CBS 101355 / FGSC A1100 / Af293) (Neosartorya fumigata).